Here is a 199-residue protein sequence, read N- to C-terminus: Elongation factor Ts (199 aa).

An involved in Mg(2+) ion dislocation from EF-Tu region spans residues 82-85; that stretch reads TDFV.

It belongs to the EF-Ts family.

Its subcellular location is the cytoplasm. Associates with the EF-Tu.GDP complex and induces the exchange of GDP to GTP. It remains bound to the aminoacyl-tRNA.EF-Tu.GTP complex up to the GTP hydrolysis stage on the ribosome. This chain is Elongation factor Ts, found in Leptospira interrogans serogroup Icterohaemorrhagiae serovar Lai (strain 56601).